Consider the following 433-residue polypeptide: Shikimate O-hydroxycinnamoyltransferase (433 aa).

The Proton acceptor role is filled by His153. 4-coumaroyl-CoA is bound by residues 252 to 255 (SSYE), 284 to 290 (DGRSRLR), and 370 to 373 (SWVR). Catalysis depends on Asp380, which acts as the Proton acceptor.

This sequence belongs to the plant acyltransferase family.

The catalysed reaction is shikimate + 4-coumaroyl-CoA = trans-4-coumaroylshikimate + CoA. Acyltransferase involved in the biosynthesis of lignin. Accepts caffeoyl-CoA and p-coumaroyl-CoA as substrates and transfers the acyl group on both shikimate and quinate acceptors. This Arabidopsis thaliana (Mouse-ear cress) protein is Shikimate O-hydroxycinnamoyltransferase (HST).